Reading from the N-terminus, the 645-residue chain is 1,4-alpha-glucan branching enzyme GlgB (645 aa).

Aspartate 309 functions as the Nucleophile in the catalytic mechanism. The active-site Proton donor is the glutamate 352. The disordered stretch occupies residues 619 to 645 (VKTRKGSKKQDGSKTKVRSNVTSRGKR). Residues 636-645 (RSNVTSRGKR) show a composition bias toward polar residues.

This sequence belongs to the glycosyl hydrolase 13 family. GlgB subfamily. As to quaternary structure, monomer.

The catalysed reaction is Transfers a segment of a (1-&gt;4)-alpha-D-glucan chain to a primary hydroxy group in a similar glucan chain.. It participates in glycan biosynthesis; glycogen biosynthesis. Catalyzes the formation of the alpha-1,6-glucosidic linkages in glycogen by scission of a 1,4-alpha-linked oligosaccharide from growing alpha-1,4-glucan chains and the subsequent attachment of the oligosaccharide to the alpha-1,6 position. This chain is 1,4-alpha-glucan branching enzyme GlgB, found in Bacillus mycoides (strain KBAB4) (Bacillus weihenstephanensis).